The following is a 74-amino-acid chain: Protein SOM1, mitochondrial (74 aa).

Component of the mitochondrial inner membrane peptidase (IMP) complex which at least consists of IMP1, IMP2 and SOM1.

The protein localises to the mitochondrion inner membrane. Its function is as follows. Non-catalytic component of the mitochondrial inner membrane peptidase (IMP) complex. IMP catalyzes the removal of signal peptides required for the targeting of proteins from the mitochondrial matrix, across the inner membrane, into the inter-membrane space. SOM1 facilitates cleavage of a subset of IMP substrates. The chain is Protein SOM1, mitochondrial (SOM1) from Saccharomyces cerevisiae (strain ATCC 204508 / S288c) (Baker's yeast).